The following is a 103-amino-acid chain: Large ribosomal subunit protein bL21 (103 aa).

The protein belongs to the bacterial ribosomal protein bL21 family. As to quaternary structure, part of the 50S ribosomal subunit. Contacts protein L20.

Functionally, this protein binds to 23S rRNA in the presence of protein L20. This chain is Large ribosomal subunit protein bL21, found in Shigella sonnei (strain Ss046).